The following is a 298-amino-acid chain: tRNA U34 carboxymethyltransferase (298 aa).

Carboxy-S-adenosyl-L-methionine contacts are provided by residues lysine 69, tryptophan 83, lysine 88, glycine 107, 129–131, 156–157, tyrosine 176, and arginine 291; these read DPS and VE.

The protein belongs to the class I-like SAM-binding methyltransferase superfamily. CmoB family. Homotetramer.

The enzyme catalyses carboxy-S-adenosyl-L-methionine + 5-hydroxyuridine(34) in tRNA = 5-carboxymethoxyuridine(34) in tRNA + S-adenosyl-L-homocysteine + H(+). Catalyzes carboxymethyl transfer from carboxy-S-adenosyl-L-methionine (Cx-SAM) to 5-hydroxyuridine (ho5U) to form 5-carboxymethoxyuridine (cmo5U) at position 34 in tRNAs. The protein is tRNA U34 carboxymethyltransferase of Campylobacter curvus (strain 525.92).